Consider the following 238-residue polypeptide: Testis-specific gene A8 protein (238 aa).

Residues 35–238 (GKGAKTNKRG…GEAVATTTMT (204 aa)) form a disordered region. Positions 39 to 48 (KTNKRGKRGG) are enriched in basic residues. Tandem repeats lie at residues 79–93 (AAAA…PESS), 94–108 (AAAA…PESS), 109–123 (AAAA…PESS), 124–138 (AAAA…LESS), 153–158 (PAAPEA), 171–176 (PAAPEA), 180–185 (PAAPEA), and 189–194 (PAAPEA). Residues 79 to 148 (AAAAAPEAAA…AAAAAPEAAA (70 aa)) form a 4 X 15 AA tandem repeats of A-A-A-A-A-P-E-A-A-A-S-[PL]-E-S-S region. Low complexity-rich tracts occupy residues 79–200 (AAAA…AAPA) and 208–220 (WEAA…AAVK). A 4 X 6 AA repeats of P-A-A-P-E-A region spans residues 153–194 (PAAPEAAAAPEVAAAPATPAAPEATAAPAAPEAATTPAAPEA).

As to expression, specifically expressed in testis (at protein level).

It localises to the cytoplasm. Its subcellular location is the nucleus. The protein resides in the nucleoplasm. The polypeptide is Testis-specific gene A8 protein (Mus musculus (Mouse)).